A 442-amino-acid polypeptide reads, in one-letter code: Trigger factor (442 aa).

One can recognise a PPIase FKBP-type domain in the interval 163-248; that stretch reads YDRVTINYCI…IIKIEKKQEL (86 aa).

This sequence belongs to the FKBP-type PPIase family. Tig subfamily.

The protein localises to the cytoplasm. The enzyme catalyses [protein]-peptidylproline (omega=180) = [protein]-peptidylproline (omega=0). Its function is as follows. Involved in protein export. Acts as a chaperone by maintaining the newly synthesized protein in an open conformation. Functions as a peptidyl-prolyl cis-trans isomerase. In Buchnera aphidicola subsp. Acyrthosiphon pisum (strain APS) (Acyrthosiphon pisum symbiotic bacterium), this protein is Trigger factor (tig).